Reading from the N-terminus, the 195-residue chain is Thioredoxin reductase-like selenoprotein T (195 aa).

The first 19 residues, 1–19 (MRLLLLLLVAASAVVRSDA), serve as a signal peptide directing secretion. Positions 46–49 (CVSU) form a cross-link, cysteinyl-selenocysteine (Cys-Sec). Sec-49 is a non-standard amino acid (selenocysteine). Residues 85-103 (IASFLSVFKLVLIGLIIVG) traverse the membrane as a helical segment.

Belongs to the SelWTH family. Selenoprotein T subfamily. Post-translationally, may contain a selenide-sulfide bond between Cys-46 and Sec-49. This bond is speculated to serve as redox-active pair.

The protein resides in the endoplasmic reticulum membrane. The catalysed reaction is [thioredoxin]-dithiol + NADP(+) = [thioredoxin]-disulfide + NADPH + H(+). Selenoprotein with thioredoxin reductase-like oxidoreductase activity. Protects dopaminergic neurons against oxidative stress and cell death. Involved in ADCYAP1/PACAP-induced calcium mobilization and neuroendocrine secretion. Plays a role in fibroblast anchorage and redox regulation. In gastric smooth muscle, modulates the contraction processes through the regulation of calcium release and MYLK activation. In pancreatic islets, involved in the control of glucose homeostasis, contributes to prolonged ADCYAP1/PACAP-induced insulin secretion. In Bos taurus (Bovine), this protein is Thioredoxin reductase-like selenoprotein T.